Reading from the N-terminus, the 444-residue chain is MLTSDRLRGMLRRLPGRLPDAVGVVRHAVPRFWNNNGFAIAASLTYTTLLALVPLLTVTFAIFSAFPAYGRLRDTARELIFDSLAPSVSDEVQAYFDQFISNAAALTGFGVIGLSLTSILLFFSVEAALNVIFRATEPRPLVIRLLSFWAVLTIMPLLLGASLSVTSGVVADLQATGRDAVTVLRFMLPGLLEAAAFTLMFLMIPNREVQWFDALVGGIAAALLMEVSKVGFGLYIAAFPTYETIYGALSVIPIFLFWLYTVWSVVLFGAEITATLPEWRAGKITQVGPEGLLSAQRIVVAVAILHELQRAARLGVGIRRGTLSTRVPVGANVIDGMLEQLQAAHWVARTRDGAWVATRNLSDATVDDLRHSLGMAIRGNLRSVGHLSAGWQNRLADLFERAEAADREVLGVCFADLFADPPSGQPSGQVETAVRQRTGLQGRI.

6 helical membrane-spanning segments follow: residues 49–69 (LLAL…FPAY), 103–123 (AAAL…LLFF), 145–165 (LLSF…SLSV), 186–206 (FMLP…MIPN), 219–239 (IAAA…IAAF), and 248–268 (ALSV…VVLF). The disordered stretch occupies residues 423-444 (SGQPSGQVETAVRQRTGLQGRI).

It belongs to the UPF0761 family.

The protein resides in the cell inner membrane. The sequence is that of UPF0761 membrane protein RC1_0578 from Rhodospirillum centenum (strain ATCC 51521 / SW).